Here is a 140-residue protein sequence, read N- to C-terminus: Putative transcription elongation factor S-II-like protein 349L (140 aa).

The segment at 100–139 (GAIKCKCGSERVFSFSKQTRSGDESTSVFALCSSCKSKWV) adopts a TFIIS-type zinc-finger fold. Positions 104, 106, 131, and 134 each coordinate Zn(2+).

This sequence belongs to the IIV-6 349L family.

The polypeptide is Putative transcription elongation factor S-II-like protein 349L (Acheta domesticus (House cricket)).